Here is a 163-residue protein sequence, read N- to C-terminus: Epithelial membrane protein 3 (163 aa).

A helical transmembrane segment spans residues 4 to 24 (LLLVVSALHILILILLFVATL). Asn-49 and Asn-56 each carry an N-linked (GlcNAc...) asparagine glycan. 3 helical membrane-spanning segments follow: residues 66–86 (VQVL…LFMF), 100–120 (TGFC…IYAI), and 139–159 (FALA…YIHL).

The protein belongs to the PMP-22/EMP/MP20 family.

The protein localises to the membrane. Its function is as follows. Probably involved in cell proliferation and cell-cell interactions. This Bos taurus (Bovine) protein is Epithelial membrane protein 3 (EMP3).